The primary structure comprises 159 residues: MAKEKGRKLIAQNKKARHDYQILDTYEAGLVLSGTEVKSLRQGRASLADGFVQLDGHEAWLHNVHVPEYSQGTWTNHSARRKRKLLLHRVEIDKLESKSQETGHTIVPLALYFKDGRAKVEIALARGKKEYDKRQTLREKQDRREAERTISAIKRKQRA.

The segment covering Tyr131–Arg148 has biased composition (basic and acidic residues). Residues Tyr131–Ala159 are disordered.

It belongs to the SmpB family.

The protein resides in the cytoplasm. Functionally, required for rescue of stalled ribosomes mediated by trans-translation. Binds to transfer-messenger RNA (tmRNA), required for stable association of tmRNA with ribosomes. tmRNA and SmpB together mimic tRNA shape, replacing the anticodon stem-loop with SmpB. tmRNA is encoded by the ssrA gene; the 2 termini fold to resemble tRNA(Ala) and it encodes a 'tag peptide', a short internal open reading frame. During trans-translation Ala-aminoacylated tmRNA acts like a tRNA, entering the A-site of stalled ribosomes, displacing the stalled mRNA. The ribosome then switches to translate the ORF on the tmRNA; the nascent peptide is terminated with the 'tag peptide' encoded by the tmRNA and targeted for degradation. The ribosome is freed to recommence translation, which seems to be the essential function of trans-translation. The chain is SsrA-binding protein from Streptomyces coelicolor (strain ATCC BAA-471 / A3(2) / M145).